The following is an 88-amino-acid chain: MANTSSAKKATRKIARRTAVNKSRRTQMRGSVRIVEEAIASGDRDAALKAMARAEPELMRAAQRNIIHRNAASRKVSRLTHSIAKLAK.

The disordered stretch occupies residues methionine 1–methionine 28.

Functionally, binds directly to 16S ribosomal RNA. In Rhodopseudomonas palustris (strain ATCC BAA-98 / CGA009), this protein is Small ribosomal subunit protein bS20.